The chain runs to 215 residues: Phosphoribosylglycinamide formyltransferase (215 aa).

(6R)-10-formyltetrahydrofolate contacts are provided by residues Arg-74, 99 to 102 (MRIL), and Asn-116. Catalysis depends on His-118, which acts as the Proton donor.

It belongs to the GART family.

It carries out the reaction N(1)-(5-phospho-beta-D-ribosyl)glycinamide + (6R)-10-formyltetrahydrofolate = N(2)-formyl-N(1)-(5-phospho-beta-D-ribosyl)glycinamide + (6S)-5,6,7,8-tetrahydrofolate + H(+). Its pathway is purine metabolism; IMP biosynthesis via de novo pathway; N(2)-formyl-N(1)-(5-phospho-D-ribosyl)glycinamide from N(1)-(5-phospho-D-ribosyl)glycinamide (10-formyl THF route): step 1/1. Its function is as follows. Catalyzes the transfer of a formyl group from 10-formyltetrahydrofolate to 5-phospho-ribosyl-glycinamide (GAR), producing 5-phospho-ribosyl-N-formylglycinamide (FGAR) and tetrahydrofolate. This chain is Phosphoribosylglycinamide formyltransferase, found in Mycobacterium tuberculosis (strain CDC 1551 / Oshkosh).